The primary structure comprises 124 residues: Membrane-anchored ubiquitin-fold protein 2 (124 aa).

The 67-residue stretch at L8–C74 folds into the Ubiquitin-like domain. S-palmitoyl cysteine attachment occurs at residues C115, C117, C119, and C124.

In terms of processing, acylated protein. Probably modified with palmitate. In terms of tissue distribution, ubiquitous, but three fold higher expression in stamens.

The protein localises to the cell membrane. In terms of biological role, may serve as docking site to facilitate the association of other proteins to the plasma membrane. The protein is Membrane-anchored ubiquitin-fold protein 2 (MUB2) of Arabidopsis thaliana (Mouse-ear cress).